A 673-amino-acid polypeptide reads, in one-letter code: Probable lysophospholipase 4 (673 aa).

The signal sequence occupies residues 1 to 19 (MYVNYIGLFAFVQISLTLA). N-linked (GlcNAc...) asparagine glycans are attached at residues Asn72, Asn125, Asn191, Asn194, Asn272, Asn301, Asn374, Asn404, Asn409, Asn481, Asn516, Asn545, and Asn574. The PLA2c domain occupies 74–615 (TCSNDNLLRP…QEYCWDGTLA (542 aa)). Residues 631-653 (TTSRAPSGTTSGTASSTTSSSVA) are disordered.

Belongs to the lysophospholipase family.

It is found in the secreted. It carries out the reaction a 1-acyl-sn-glycero-3-phosphocholine + H2O = sn-glycerol 3-phosphocholine + a fatty acid + H(+). Its function is as follows. Catalyzes the release of fatty acids from lysophospholipids. The protein is Probable lysophospholipase 4 (plb4) of Schizosaccharomyces pombe (strain 972 / ATCC 24843) (Fission yeast).